A 326-amino-acid chain; its full sequence is L-threo-3-hydroxyaspartate ammonia-lyase (326 aa).

Lysine 53 bears the N6-(pyridoxal phosphate)lysine mark. Residues asparagine 80, 179-183 (GGGGL), and serine 304 each bind pyridoxal 5'-phosphate.

This sequence belongs to the serine/threonine dehydratase family. As to quaternary structure, monomer. Pyridoxal 5'-phosphate serves as cofactor. Mn(2+) is required as a cofactor. Requires Mg(2+) as cofactor. The cofactor is Ca(2+).

The catalysed reaction is (3S)-3-hydroxy-L-aspartate = oxaloacetate + NH4(+). With respect to regulation, is strongly inhibited by hydroxylamine and EDTA in vitro. In terms of biological role, catalyzes the deamination of L-threo-3-hydroxyaspartate to oxaloacetate and ammonia. Shows a high specificity towards L-threo-3-hydroxyaspartate as other 3-hydroxyaminoacids, i.e. D,L-erythro- and D-threo-3-hydroxyaspartate, D-threonine, L-threonine, D,L-allothreonine, D-serine, and L-serine, are not substrates for this enzyme. Exhibits no detectable serine racemase activity. Is responsible for the 3-hydroxyaspartate resistance of S.cerevisiae, and thus may be involved in the detoxification of naturally occurring 3-hydroxyaspartate. The sequence is that of L-threo-3-hydroxyaspartate ammonia-lyase (SRY1) from Saccharomyces cerevisiae (strain ATCC 204508 / S288c) (Baker's yeast).